Consider the following 3388-residue polypeptide: MNDQRKKARNTPFNMLKRERNRVSTVQQLTKRFSLGMLQGRGPLKLFMALVAFLRFLTIPPTAGILKRWGTIKKSKAINVLRGFRKEIGRMLNILNRRRRTAGMIIMLIPTVMAFHLTTRNGEPHMIVSRQEKGKSLLFKTKDGTNMCTLMAMDLGELCEDTITYKCPFLKQNEPEDIDCWCNSTSTWVTYGTCTTTGEHRREKRSVALVPHVGMGLETRTETWMSSEGAWKHAQRIETWILRHPGFTIMAAILAYTIGTTHFQRVLIFILLTAIAPSMTMRCIGISNRDFVEGVSGGSWVDIVLEHGSCVTTMAKNKPTLDFELIKTEAKQPATLRKYCIEAKLTNTTTDSRCPTQGEPTLNEEQDKRFVCKHSMVDRGWGNGCGLFGKGGIVTCAMFTCKKNMEGKIVQPENLEYTVVITPHSGEEHAVGNDTGKHGKEVKITPQSSITEAELTGYGTVTMECSPRTGLDFNEMVLLQMKDKAWLVHRQWFLDLPLPWLPGADTQGSNWIQKETLVTFKNPHAKKQDVVVLGSQEGAMHTALTGATEIQMSSGNLLFTGHLKCRLRMDKLQLKGMSYSMCTGKFKVVKEIAETQHGTIVIRVQYEGDGSPCKTPFEIMDLEKRHVLGRLTTVNPIVTEKDSPVNIEAEPPFGDSYIIIGVEPGQLKLDWFKKGSSIGQMFETTMRGAKRMAILGDTAWDFGSLGGVFTSIGKALHQVFGAIYGAAFSGVSWTMKILIGVIITWIGMNSRSTSLSVSLVLVGIVTLYLGVMVQADSGCVVSWKNKELKCGSGIFVTDNVHTWTEQYKFQPESPSKLASAIQKAHEEGICGIRSVTRLENLMWKQITSELNHILSENEVKLTIMTGDIKGIMQVGKRSLRPQPTELRYSWKTWGKAKMLSTELHNQTFLIDGPETAECPNTNRAWNSLEVEDYGFGVFTTNIWLRLREKQDAFCDSKLMSAAIKDNRAVHADMGYWIESALNDTWKIEKASFIEVKSCHWPKSHTLWSNGVLESEMVIPKNFAGPVSQHNNRPGYHTQTAGPWHLGKLEMDFDFCEGTTVVVTEDCGNRGPSLRTTTASGKLITEWCCRSCTLPPLRYRGEDGCWYGMEIRPLKEKEENLVSSLVTAGHGQIDNFSLGILGMALFLEEMLRTRVGTKHAILLVAVSFVTLITGNMSFRDLGRVMVMVGATMTDDIGMGVTYLALLAAFKVRPTFAAGLLLRKLTSKELMMTTIGIVLLSQSSIPETILELTDALALGMMVLKMVRNMEKYQLAVTIMAILCVPNAVILQNAWKVSCTILAVVSVSPLFLTSSQQKADWIPLALTIKGLNPTAIFLTTLSRTSKKRSWPLNEAIMAVGMVSILASSLLKNDTPMTGPLVAGGLLTVCYVLTGRSADLELERATDVKWDDQAEISGSSPILSITISEDGSMSIKNEEEEQTLTILIRTGLLVISGLFPVSIPITAAAWYLWEVKKQRAGVLWDVPSPPPVGKAELEDGAYRIKQKGILGYSQIGAGVYKEGTFHTMWHVTRGAVLMHKGKRIEPSWADVKKDLISYGGGWKLEGEWKEGEEVQVLALEPGKNPRAVQTKPGLFRTNTGTIGAVSLDFSPGTSGSPIVDKKGKVVGLYGNGVVTRSGAYVSAIAQTEKSIEDNPEIEDDIFRKRRLTIMDLHPGAGKTKRYLPAIVREAIKRGLRTLILAPTRVVAAEMEEALRGLPIRYQTPAIRAEHTGREIVDLMCHATFTMRLLSPIRVPNYNLIIMDEAHFTDPASIAARGYISTRVEMGEAAGIFMTATPPGSRDPFPQSNAPIMDEEREIPERSWNSGHEWVTDFKGKTVWFVPSIKTGNDIAACLRKNGKRVIQLSRKTFDSEYVKTRTNDWDFVVTTDISEMGANFKAERVIDPRRCMKPVILTDGEERVILAGPMPVTHSSAAQRRGRIGRNPRNENDQYIYMGEPLENDEDCAHWKEAKMLLDNINTPEGIIPSMFEPEREKVDAIDGEYRLRGEARKTFVDLMRRGDLPVWLAYKVAAEGINYADRRWCFDGTRNNQILEENVEVEIWTKEGERKKLKPRWLDARIYSDPLALKEFAAGRKSLTLNLITEMGRLPTFMTQKARDALDNLAVLHTAEAGGKAYNHALSELPETLETLLLLTLLATVTGGIFLFLMSGRGIGKMTLGMCCIITASILLWYAQIQPHWIAASIILEFFLIVLLIPEPEKQRTPQDNQLTYVIIAILTVVAATMANEMGFLEKTKKDLGLGNIATQQPESNILDIDLRPASAWTLYAVATTFITPMLRHSIENSSVNVSLTAIANQATVLMGLGKGWPLSKMDIGVPLLAIGCYSQVNPITLTAALLLLVAHYAIIGPGLQAKATREAQKRAAAGIMKNPTVDGITVIDLDPIPYDPKFEKQLGQVMLLVLCVTQVLMMRTTWALCEALTLATGPVSTLWEGNPGRFWNTTIAVSMANIFRGSYLAGAGLLFSIMKNTTSTRRGTGNIGETLGEKWKSRLNALGKSEFQIYKKSGIQEVDRTLAKEGIKRGETDHHAVSRGSAKLRWFVERNLVTPEGKVVDLGCGRGGWSYYCGGLKNVREVKGLTKGGPGHEEPIPMSTYGWNLVRLQSGVDVFFVPPEKCDTLLCDIGESSPNPTVEAGRTLRVLNLVENWLNNNTQFCVKVLNPYMPSVIERMETLQRKYGGALVRNPLSRNSTHEMYWVSNASGNIVSSVNMISRMLINRFTMRHKKATYEPDVDLGSGTRNIGIESETPNLDIIGKRIEKIKQEHETSWHYDQDHPYKTWAYHGSYETKQTGSASSMVNGVVRLLTKPWDVVPMVTQMAMTDTTPFGQQRVFKEKVDTRTQEPKEGTKKLMKITAEWLWKELGKKKTPRMCTREEFTKKVRSNAALGAIFTDENKWKSAREAVEDSRFWELVDKERNLHLEGKCETCVYNMMGKREKKLGEFGKAKGSRAIWYMWLGARFLEFEALGFLNEDHWFSRENSLSGVEGEGLHKLGYILREVSKKEGGAMYADDTAGWDTRITIEDLKNEEMITNHMAGEHKKLAEAIFKLTYQNKVVRVQRPTPRGTVMDIISRRDQRGSGQVGTYGLNTFTNMEAQLIRQMEGEGIFKSIQHLTASEEIAVQDWLARVGRERLSRMAISGDDCVVKPLDDRFARALTALNDMGKVRKDIQQWEPSRGWNDWTQVPFCSHHFHELIMKDGRTLVVPCRNQDELIGRARISQGAGWSLRETACLGKSYAQMWSLMYFHRRDLRLAANAICSAVPSHWVPTSRTTWSIHASHEWMTTEDMLTVWNKVWILENPWMEDKTPVESWEEIPYLGKREDQWCGSLIGLTSRATWAKNIQTAINQVRSLIGNEEYTDYMPSMKRFRREEEEAGVLW.

Positions 1–15 (MNDQRKKARNTPFNM) are interaction with host EXOC1. At 1–101 (MNDQRKKARN…LNILNRRRRT (101 aa)) the chain is on the cytoplasmic side. The interval 37-72 (MLQGRGPLKLFMALVAFLRFLTIPPTAGILKRWGTI) is hydrophobic; homodimerization of capsid protein C. The propeptide at 101-114 (TAGMIIMLIPTVMA) is ER anchor for the capsid protein C, removed in mature form by serine protease NS3. A helical transmembrane segment spans residues 102–122 (AGMIIMLIPTVMAFHLTTRNG). The Extracellular segment spans residues 123 to 238 (EPHMIVSRQE…GAWKHAQRIE (116 aa)). The N-linked (GlcNAc...) asparagine; by host glycan is linked to N183. A helical membrane pass occupies residues 239–259 (TWILRHPGFTIMAAILAYTIG). The Cytoplasmic portion of the chain corresponds to 260–265 (TTHFQR). Residues 266-280 (VLIFILLTAIAPSMT) form a helical membrane-spanning segment. The Extracellular segment spans residues 281 to 725 (MRCIGISNRD…LHQVFGAIYG (445 aa)). 4 disulfides stabilise this stretch: C283/C310, C340/C401, C354/C385, and C372/C396. The N-linked (GlcNAc...) asparagine; by host glycan is linked to N347. The tract at residues 378–391 (DRGWGNGCGLFGKG) is fusion peptide. N433 carries N-linked (GlcNAc...) asparagine; by host glycosylation. Intrachain disulfides connect C465/C565 and C582/C613. Residues 726–746 (AAFSGVSWTMKILIGVIITWI) form a helical membrane-spanning segment. Residues 747-752 (GMNSRS) lie on the Cytoplasmic side of the membrane. Residues 753–773 (TSLSVSLVLVGIVTLYLGVMV) traverse the membrane as a helical segment. The Extracellular segment spans residues 774 to 1195 (QADSGCVVSW…MVGATMTDDI (422 aa)). Intrachain disulfides connect C779–C790, C830–C918, C954–C998, C1055–C1104, C1066–C1088, and C1087–C1091. Residues N905 and N982 are each glycosylated (N-linked (GlcNAc...) asparagine; by host). N1134 carries an N-linked (GlcNAc...) asparagine; by host glycan. A helical transmembrane segment spans residues 1196-1220 (GMGVTYLALLAAFKVRPTFAAGLLL). Residues 1221 to 1226 (RKLTSK) lie on the Cytoplasmic side of the membrane. The chain crosses the membrane as a helical span at residues 1227 to 1245 (ELMMTTIGIVLLSQSSIPE). Residues 1246–1269 (TILELTDALALGMMVLKMVRNMEK) lie on the Lumenal side of the membrane. The helical transmembrane segment at 1270-1290 (YQLAVTIMAILCVPNAVILQN) threads the bilayer. Residue A1291 is a topological domain, cytoplasmic. Residues 1292 to 1310 (WKVSCTILAVVSVSPLFLT) traverse the membrane as a helical segment. Topologically, residues 1311–1317 (SSQQKAD) are lumenal. Residues 1318–1338 (WIPLALTIKGLNPTAIFLTTL) form a helical membrane-spanning segment. Residues 1339-1346 (SRTSKKRS) lie on the Cytoplasmic side of the membrane. The chain crosses the membrane as a helical span at residues 1347-1367 (WPLNEAIMAVGMVSILASSLL). Residues 1368–1370 (KND) lie on the Lumenal side of the membrane. A helical membrane pass occupies residues 1371–1391 (TPMTGPLVAGGLLTVCYVLTG). At 1392 to 1447 (RSADLELERATDVKWDDQAEISGSSPILSITISEDGSMSIKNEEEEQTLTILIRTG) the chain is on the cytoplasmic side. Positions 1398–1437 (LERATDVKWDDQAEISGSSPILSITISEDGSMSIKNEEEE) are interacts with and activates NS3 protease. Positions 1448 to 1468 (LLVISGLFPVSIPITAAAWYL) form an intramembrane region, helical. The Cytoplasmic segment spans residues 1469–2144 (WEVKKQRAGV…LSELPETLET (676 aa)). Residues 1476–1653 (AGVLWDVPSP…EKSIEDNPEI (178 aa)) form the Peptidase S7 domain. Active-site charge relay system; for serine protease NS3 activity residues include H1526, D1550, and S1610. Residues 1655–1811 (DDIFRKRRLT…QSNAPIMDEE (157 aa)) enclose the Helicase ATP-binding domain. Residues 1659 to 1662 (RKRR) form an important for RNA-binding region. 1668–1675 (LHPGAGKT) contacts ATP. Positions 1759–1762 (DEAH) match the DEAH box motif. Residues 1821–1988 (SGHEWVTDFK…IIPSMFEPER (168 aa)) form the Helicase C-terminal domain. At K1863 the chain carries N6-acetyllysine; by host. The helical transmembrane segment at 2145 to 2165 (LLLLTLLATVTGGIFLFLMSG) threads the bilayer. The Lumenal segment spans residues 2166–2167 (RG). The helical intramembrane region spans 2168–2188 (IGKMTLGMCCIITASILLWYA). Residue Q2189 is a topological domain, lumenal. Residues 2190-2210 (IQPHWIAASIILEFFLIVLLI) traverse the membrane as a helical segment. The Cytoplasmic segment spans residues 2211–2225 (PEPEKQRTPQDNQLT). A helical transmembrane segment spans residues 2226–2246 (YVIIAILTVVAATMANEMGFL). The Lumenal segment spans residues 2247 to 2271 (EKTKKDLGLGNIATQQPESNILDID). An intramembrane region (helical) is located at residues 2272–2292 (LRPASAWTLYAVATTFITPML). Residues 2293 to 2313 (RHSIENSSVNVSLTAIANQAT) are Lumenal-facing. Residues N2298 and N2302 are each glycosylated (N-linked (GlcNAc...) asparagine; by host). Positions 2314-2334 (VLMGLGKGWPLSKMDIGVPLL) form an intramembrane region, helical. Residues 2335-2344 (AIGCYSQVNP) lie on the Lumenal side of the membrane. A helical membrane pass occupies residues 2345 to 2365 (ITLTAALLLLVAHYAIIGPGL). Residues 2366 to 2410 (QAKATREAQKRAAAGIMKNPTVDGITVIDLDPIPYDPKFEKQLGQ) are Cytoplasmic-facing. The helical transmembrane segment at 2411-2431 (VMLLVLCVTQVLMMRTTWALC) threads the bilayer. Residues 2432–2456 (EALTLATGPVSTLWEGNPGRFWNTT) lie on the Lumenal side of the membrane. N-linked (GlcNAc...) asparagine; by host glycosylation occurs at N2454. A helical transmembrane segment spans residues 2457–2477 (IAVSMANIFRGSYLAGAGLLF). Residues 2478–3388 (SIMKNTTSTR…REEEEAGVLW (911 aa)) lie on the Cytoplasmic side of the membrane. Positions 2490-2752 (TGNIGETLGE…DVDLGSGTRN (263 aa)) constitute an mRNA cap 0-1 NS5-type MT domain. S2544 serves as a coordination point for S-adenosyl-L-methionine. A Phosphoserine modification is found at S2544. The active-site For 2'-O-MTase activity is K2549. Residues 2565–2568 (VVDL) carry the SUMO-interacting motif motif. 6 residues coordinate S-adenosyl-L-methionine: G2574, W2575, T2592, K2593, D2619, and V2620. The active-site For 2'-O-MTase activity is the D2634. I2635 is a binding site for S-adenosyl-L-methionine. Catalysis depends on for 2'-O-MTase activity residues K2669 and E2705. Y2707 serves as a coordination point for S-adenosyl-L-methionine. Zn(2+) contacts are provided by E2926, H2930, C2935, and C2938. The 150-residue stretch at 3017–3166 (AMYADDTAGW…PLDDRFARAL (150 aa)) folds into the RdRp catalytic domain. Zn(2+) contacts are provided by H3200, C3216, and C3335.

In the N-terminal section; belongs to the class I-like SAM-binding methyltransferase superfamily. mRNA cap 0-1 NS5-type methyltransferase family. As to quaternary structure, homodimer. Interacts (via N-terminus) with host EXOC1 (via C-terminus); this interaction results in EXOC1 degradation through the proteasome degradation pathway. In terms of assembly, forms heterodimers with envelope protein E in the endoplasmic reticulum and Golgi. Homodimer; in the endoplasmic reticulum and Golgi. Interacts with protein prM. Interacts with non-structural protein 1. As to quaternary structure, homodimer; Homohexamer when secreted. Interacts with envelope protein E. Interacts with host PRKAA1. In terms of assembly, interacts (via N-terminus) with serine protease NS3. Forms a heterodimer with serine protease NS3. May form homooligomers. As to quaternary structure, forms a heterodimer with NS2B. Interacts with NS4B. Interacts with unphosphorylated RNA-directed RNA polymerase NS5; this interaction stimulates RNA-directed RNA polymerase NS5 guanylyltransferase activity. Interacts with host SHFL. In terms of assembly, interacts with host MAVS; this interaction inhibits the synthesis of IFN-beta. Interacts with host SHFL. Interacts with host AUP1; the interaction occurs in the presence of Dengue virus NS4B and induces lipophagy which facilitates production of virus progeny particles. May interact with host SRPRA and SEC61G. Interacts with serine protease NS3. As to quaternary structure, homodimer. Interacts with host STAT2; this interaction inhibits the phosphorylation of the latter, and, when all viral proteins are present (polyprotein), targets STAT2 for degradation. Interacts with serine protease NS3. Interacts with host PAF1 complex; the interaction may prevent the recruitment of the PAF1 complex to interferon-responsive genes, and thus reduces the immune response. Specific enzymatic cleavages in vivo yield mature proteins. Cleavages in the lumen of endoplasmic reticulum are performed by host signal peptidase, whereas cleavages in the cytoplasmic side are performed by serine protease NS3. Signal cleavage at the 2K-4B site requires a prior NS3 protease-mediated cleavage at the 4A-2K site. Post-translationally, cleaved in post-Golgi vesicles by a host furin, releasing the mature small envelope protein M, and peptide pr. This cleavage is incomplete as up to 30% of viral particles still carry uncleaved prM. In terms of processing, N-glycosylated. N-glycosylated. The excreted form is glycosylated and this is required for efficient secretion of the protein from infected cells. Post-translationally, acetylated by host KAT5. Acetylation modulates NS3 RNA-binding and unwinding activities and plays an important positive role for viral replication. In terms of processing, sumoylation of RNA-directed RNA polymerase NS5 increases NS5 protein stability allowing proper viral RNA replication. Phosphorylated on serines residues. This phosphorylation may trigger NS5 nuclear localization.

It localises to the virion. The protein resides in the host nucleus. Its subcellular location is the host cytoplasm. The protein localises to the host perinuclear region. It is found in the secreted. It localises to the virion membrane. The protein resides in the host endoplasmic reticulum membrane. Its subcellular location is the host mitochondrion. The catalysed reaction is Selective hydrolysis of -Xaa-Xaa-|-Yaa- bonds in which each of the Xaa can be either Arg or Lys and Yaa can be either Ser or Ala.. It catalyses the reaction RNA(n) + a ribonucleoside 5'-triphosphate = RNA(n+1) + diphosphate. It carries out the reaction a ribonucleoside 5'-triphosphate + H2O = a ribonucleoside 5'-diphosphate + phosphate + H(+). The enzyme catalyses ATP + H2O = ADP + phosphate + H(+). The catalysed reaction is a 5'-end (5'-triphosphoguanosine)-ribonucleoside in mRNA + S-adenosyl-L-methionine = a 5'-end (N(7)-methyl 5'-triphosphoguanosine)-ribonucleoside in mRNA + S-adenosyl-L-homocysteine. It catalyses the reaction a 5'-end (N(7)-methyl 5'-triphosphoguanosine)-ribonucleoside in mRNA + S-adenosyl-L-methionine = a 5'-end (N(7)-methyl 5'-triphosphoguanosine)-(2'-O-methyl-ribonucleoside) in mRNA + S-adenosyl-L-homocysteine + H(+). Plays a role in virus budding by binding to the cell membrane and gathering the viral RNA into a nucleocapsid that forms the core of a mature virus particle. During virus entry, may induce genome penetration into the host cytoplasm after hemifusion induced by the surface proteins. Can migrate to the cell nucleus where it modulates host functions. Overcomes the anti-viral effects of host EXOC1 by sequestering and degrading the latter through the proteasome degradation pathway. Functionally, inhibits RNA silencing by interfering with host Dicer. Its function is as follows. Prevents premature fusion activity of envelope proteins in trans-Golgi by binding to envelope protein E at pH6.0. After virion release in extracellular space, gets dissociated from E dimers. In terms of biological role, acts as a chaperone for envelope protein E during intracellular virion assembly by masking and inactivating envelope protein E fusion peptide. prM is the only viral peptide matured by host furin in the trans-Golgi network probably to avoid catastrophic activation of the viral fusion activity in acidic Golgi compartment prior to virion release. prM-E cleavage is inefficient, and many virions are only partially matured. These uncleaved prM would play a role in immune evasion. May play a role in virus budding. Exerts cytotoxic effects by activating a mitochondrial apoptotic pathway through M ectodomain. May display a viroporin activity. Functionally, binds to host cell surface receptor and mediates fusion between viral and cellular membranes. Envelope protein is synthesized in the endoplasmic reticulum in the form of heterodimer with protein prM. They play a role in virion budding in the ER, and the newly formed immature particle is covered with 60 spikes composed of heterodimer between precursor prM and envelope protein E. The virion is transported to the Golgi apparatus where the low pH causes dissociation of PrM-E heterodimers and formation of E homodimers. prM-E cleavage is inefficient, and many virions are only partially matured. These uncleaved prM would play a role in immune evasion. Its function is as follows. Involved in immune evasion, pathogenesis and viral replication. Once cleaved off the polyprotein, is targeted to three destinations: the viral replication cycle, the plasma membrane and the extracellular compartment. Essential for viral replication. Required for formation of the replication complex and recruitment of other non-structural proteins to the ER-derived membrane structures. Excreted as a hexameric lipoparticle that plays a role against host immune response. Antagonizing the complement function. Binds to the host macrophages and dendritic cells. Inhibits signal transduction originating from Toll-like receptor 3 (TLR3). Mediates complement activation, which may contribute to the pathogenesis of the vascular leakage that occurs in severe dengue disease. Activates autophagy through the AMPK/ERK/mTOR signaling pathway. Mechanistically, acts as the assembly platform for STK11-AMPK interactions and promotes STK11-AMPK interactions. In turn, promotes phosphorylation of the AMPK kinase structural domain and activates AMPK, thereby positively regulating the AMPK/ERK/mTOR signaling pathway and inducing autophagy. In terms of biological role, disrupts the host endothelial glycocalyx layer of host pulmonary microvascular endothelial cells, inducing degradation of sialic acid and shedding of heparan sulfate proteoglycans. NS1 induces expression of sialidases, heparanase, and activates cathepsin L, which activates heparanase via enzymatic cleavage. These effects are probably linked to the endothelial hyperpermeability observed in severe dengue disease. Component of the viral RNA replication complex that functions in virion assembly and antagonizes the host immune response. Functionally, required cofactor for the serine protease function of NS3. May have membrane-destabilizing activity and form viroporins. Its function is as follows. Displays three enzymatic activities: serine protease, NTPase and RNA helicase. NS3 serine protease, in association with NS2B, performs its autocleavage and cleaves the polyprotein at dibasic sites in the cytoplasm: C-prM, NS2A-NS2B, NS2B-NS3, NS3-NS4A, NS4A-2K and NS4B-NS5. NS3 RNA helicase binds RNA and unwinds dsRNA in the 3' to 5' direction. In terms of biological role, regulates the ATPase activity of the NS3 helicase activity. NS4A allows NS3 helicase to conserve energy during unwinding. Plays a role in the inhibition of the host innate immune response. Interacts with host MAVS and thereby prevents the interaction between RIGI and MAVS. In turn, IFN-beta production is impaired. Interacts with host AUP1 which mediates induction of lipophagy in host cells and facilitates production of virus progeny particles. Functions as a signal peptide for NS4B and is required for the interferon antagonism activity of the latter. Functionally, induces the formation of ER-derived membrane vesicles where the viral replication takes place. Inhibits interferon (IFN)-induced host STAT1 phosphorylation and nuclear translocation, thereby preventing the establishment of cellular antiviral state by blocking the IFN-alpha/beta pathway. Its function is as follows. Replicates the viral (+) and (-) RNA genome, and performs the capping of genomes in the cytoplasm. NS5 methylates viral RNA cap at guanine N-7 and ribose 2'-O positions. Besides its role in RNA genome replication, also prevents the establishment of cellular antiviral state by blocking the interferon-alpha/beta (IFN-alpha/beta) signaling pathway. Inhibits host TYK2 and STAT2 phosphorylation, thereby preventing activation of JAK-STAT signaling pathway. May reduce immune responses by preventing the recruitment of the host PAF1 complex to interferon-responsive genes. The chain is Genome polyprotein from Aedimorphus (Red guenon).